A 470-amino-acid chain; its full sequence is mRNA export factor ICP27 homolog (470 aa).

2 disordered regions span residues M1–D31 and F73–R202. The span at F73–P85 shows a compositional bias: polar residues. 2 stretches are compositionally biased toward basic residues: residues H94–N107 and R178–N187. 4 residues coordinate Zn(2+): C359, H437, C441, and C446. The segment at C359–C446 adopts a CHC2-type zinc-finger fold.

This sequence belongs to the HHV-1 ICP27 protein family. Homodimer. Homodimerization is required for transactivation. Associates in a complex with RNA, and host export factors NXF1/TAP and ALYREF; these interactions allow nuclear export of viral transcripts. Interacts with three host shuttling SR proteins SRSF1, SRSF3 and SRSF7. Interacts with host SRPK1. Interacts with IE62; this interaction enhances IE62 transactivation.

Its subcellular location is the host cytoplasm. It localises to the host nucleus. Its function is as follows. Multifunctional regulator of the expression of viral genes that mediates nuclear export of viral intronless mRNAs. This immediate early (EI) protein promotes the nuclear export of viral intronless mRNAs by interacting with mRNAs and host NXF1/TAP. This chain is mRNA export factor ICP27 homolog, found in Equine herpesvirus 1 (strain Kentucky A) (EHV-1).